Consider the following 157-residue polypeptide: CASP-like protein 1 (157 aa).

Residues 1–13 (MKTEARDGGSEWR) lie on the Cytoplasmic side of the membrane. Residues 14–34 (WVAIFELFLRLAAIVSTSVAV) traverse the membrane as a helical segment. The Extracellular segment spans residues 35–40 (YAAMGK). A helical membrane pass occupies residues 41-61 (IFVVAVNGVACFYLLMSLPVS). Topologically, residues 62–82 (IFNIMRPHAYPANRVFLNIMD) are cytoplasmic. The chain crosses the membrane as a helical span at residues 83–103 (MVMVALVTAGALAAGIVYLVE). Residues 104 to 121 (KAGNARASWVSVWSQFDS) lie on the Extracellular side of the membrane. The chain crosses the membrane as a helical span at residues 122–142 (SSCFAVLALILHVLLSGVILY). Topologically, residues 143 to 157 (KQALNIKFKKLDSVD) are cytoplasmic.

Belongs to the Casparian strip membrane proteins (CASP) family. In terms of assembly, homodimer and heterodimers.

It localises to the cell membrane. This Picea sitchensis (Sitka spruce) protein is CASP-like protein 1.